The sequence spans 204 residues: Peptide deformylase (204 aa).

Residues cysteine 131 and histidine 174 each contribute to the Fe cation site. Glutamate 175 is a catalytic residue. Residue histidine 178 coordinates Fe cation.

The protein belongs to the polypeptide deformylase family. Fe(2+) is required as a cofactor.

It carries out the reaction N-terminal N-formyl-L-methionyl-[peptide] + H2O = N-terminal L-methionyl-[peptide] + formate. In terms of biological role, removes the formyl group from the N-terminal Met of newly synthesized proteins. Requires at least a dipeptide for an efficient rate of reaction. N-terminal L-methionine is a prerequisite for activity but the enzyme has broad specificity at other positions. In Streptococcus mutans serotype c (strain ATCC 700610 / UA159), this protein is Peptide deformylase.